Here is a 480-residue protein sequence, read N- to C-terminus: UDP-N-acetylmuramoylalanine--D-glutamate ligase (480 aa).

110–116 provides a ligand contact to ATP; it reads GTNGKST.

It belongs to the MurCDEF family.

The protein resides in the cytoplasm. The enzyme catalyses UDP-N-acetyl-alpha-D-muramoyl-L-alanine + D-glutamate + ATP = UDP-N-acetyl-alpha-D-muramoyl-L-alanyl-D-glutamate + ADP + phosphate + H(+). The protein operates within cell wall biogenesis; peptidoglycan biosynthesis. Its function is as follows. Cell wall formation. Catalyzes the addition of glutamate to the nucleotide precursor UDP-N-acetylmuramoyl-L-alanine (UMA). This is UDP-N-acetylmuramoylalanine--D-glutamate ligase from Synechococcus sp. (strain JA-2-3B'a(2-13)) (Cyanobacteria bacterium Yellowstone B-Prime).